The following is a 156-amino-acid chain: ATP synthase subunit b (156 aa).

The helical transmembrane segment at 11–31 threads the bilayer; the sequence is LIAFVVFVIFCMKYVWPPIIG.

Belongs to the ATPase B chain family. As to quaternary structure, F-type ATPases have 2 components, F(1) - the catalytic core - and F(0) - the membrane proton channel. F(1) has five subunits: alpha(3), beta(3), gamma(1), delta(1), epsilon(1). F(0) has three main subunits: a(1), b(2) and c(10-14). The alpha and beta chains form an alternating ring which encloses part of the gamma chain. F(1) is attached to F(0) by a central stalk formed by the gamma and epsilon chains, while a peripheral stalk is formed by the delta and b chains.

It is found in the cell inner membrane. In terms of biological role, f(1)F(0) ATP synthase produces ATP from ADP in the presence of a proton or sodium gradient. F-type ATPases consist of two structural domains, F(1) containing the extramembraneous catalytic core and F(0) containing the membrane proton channel, linked together by a central stalk and a peripheral stalk. During catalysis, ATP synthesis in the catalytic domain of F(1) is coupled via a rotary mechanism of the central stalk subunits to proton translocation. Component of the F(0) channel, it forms part of the peripheral stalk, linking F(1) to F(0). The sequence is that of ATP synthase subunit b from Colwellia psychrerythraea (strain 34H / ATCC BAA-681) (Vibrio psychroerythus).